The sequence spans 792 residues: uncharacterized protein (792 aa).

25 consecutive repeat copies span residues 91-102 (NSSTNATTTASI), 103-114 (NVRTSATTTASI), 115-126 (NVRTSATTTEST), 127-138 (NSNTNATTTEST), 139-150 (NSSTNATTTASI), 151-162 (NVRTSATTTEST), 163-174 (NSSTNATTTASI), 175-186 (NVRTSATTTEST), 187-198 (NSSTNATTTASI), 199-210 (NVRTSATTTEST), 211-222 (NSNTNASTNATT), 223-234 (NSSTNATTTAST), 235-246 (NVRTSATTNATT), 247-258 (NSSTNATTTAST), 259-270 (NVRTSATTTAST), 271-282 (NVRTSATTTASI), 283-294 (NVRTSATTTESI), 295-306 (NSSTNATTTEST), 307-318 (NSNTSATTTEST), 319-330 (DSNTNATTTASI), 331-342 (NVRTSATTTEST), 343-354 (NSNTSATTTEST), 355-366 (DSNTSATTTAST), 367-378 (NSSTNATTTAST), and 379-390 (NSSTNATTTEST). Residues 91–390 (NSSTNATTTA…STNATTTEST (300 aa)) are 25 X 12 AA tandem repeat of N-[SV]-[RS]-T-[NS]-A-T-T-T-[AE]-[ST]-[IT]. The segment at 113–417 (SINVRTSATT…RFHPVTDINK (305 aa)) is disordered. The segment covering 118-393 (TSATTTESTN…ATTTESTNAS (276 aa)) has biased composition (low complexity). The segment covering 394–417 (AKEDANKDGNAEDNRFHPVTDINK) has biased composition (basic and acidic residues).

This is an uncharacterized protein from Saccharomyces cerevisiae (strain ATCC 204508 / S288c) (Baker's yeast).